A 112-amino-acid chain; its full sequence is ATP synthase epsilon chain (112 aa).

The protein belongs to the ATPase epsilon chain family. F-type ATPases have 2 components, CF(1) - the catalytic core - and CF(0) - the membrane proton channel. CF(1) has five subunits: alpha(3), beta(3), gamma(1), delta(1), epsilon(1). CF(0) has three main subunits: a, b and c.

The protein localises to the cell inner membrane. Its function is as follows. Produces ATP from ADP in the presence of a proton gradient across the membrane. In Rickettsia prowazekii (strain Madrid E), this protein is ATP synthase epsilon chain (atpC).